The sequence spans 270 residues: Dehydrodolichyl diphosphate synthase (270 aa).

It belongs to the UPP synthase family.

Its subcellular location is the endoplasmic reticulum membrane. The protein operates within protein modification; protein glycosylation. In terms of biological role, cis-prenyl transferase that adds multiple copies of isopentenyl pyrophosphate (IPP) to farnesyl pyrophosphate (FPP) to produce dehydrodolichyl diphosphate (Dedol-PP). The polypeptide is Dehydrodolichyl diphosphate synthase (RER2) (Encephalitozoon cuniculi (strain GB-M1) (Microsporidian parasite)).